The chain runs to 556 residues: Protein trichome birefringence-like 1 (556 aa).

The chain crosses the membrane as a helical; Signal-anchor for type II membrane protein span at residues 38-58 (TFVYAFVVTFVALTVFLAFSP). Positions 269-271 (GDS) match the GDS motif motif. The DCXHWCLPGXXDXWN motif signature appears at 514-528 (DCSHWCLPGVPDSWN).

This sequence belongs to the PC-esterase family. TBL subfamily. As to expression, not expressed in trichomes.

Its subcellular location is the membrane. In terms of biological role, can complement TBR and is therefore functionally equivalent, but may work in different tissue. May act as a bridging protein that binds pectin and other cell wall polysaccharides. Probably involved in maintaining esterification of pectins. May be involved in the specific O-acetylation of cell wall polymers. This Arabidopsis thaliana (Mouse-ear cress) protein is Protein trichome birefringence-like 1 (TBL1).